The sequence spans 258 residues: Snake venom serine protease KN13 (258 aa).

Positions 1–18 (MVLIRVLANLLILQLSYA) are cleaved as a signal peptide. Residues 19–24 (QRSSEL) constitute a propeptide that is removed on maturation. Positions 25–249 (VIGGDECNIN…HLDWIQNIIA (225 aa)) constitute a Peptidase S1 domain. 6 disulfide bridges follow: Cys-31/Cys-163, Cys-50/Cys-66, Cys-98/Cys-256, Cys-142/Cys-210, Cys-174/Cys-189, and Cys-200/Cys-225. The Charge relay system role is filled by His-65. Residue Asn-103 is glycosylated (N-linked (GlcNAc...) asparagine). Asp-110 serves as the catalytic Charge relay system. N-linked (GlcNAc...) asparagine glycosylation is found at Asn-121, Asn-122, Asn-154, and Asn-170. Ser-204 (charge relay system) is an active-site residue. Asn-251 carries an N-linked (GlcNAc...) asparagine glycan.

The protein belongs to the peptidase S1 family. Snake venom subfamily. Monomer. Expressed by the venom gland.

The protein localises to the secreted. In terms of biological role, snake venom serine protease that may act in the hemostasis system of the prey. In Trimeresurus stejnegeri (Chinese green tree viper), this protein is Snake venom serine protease KN13.